The following is a 69-amino-acid chain: Large ribosomal subunit protein uL29 (69 aa).

The protein belongs to the universal ribosomal protein uL29 family.

This is Large ribosomal subunit protein uL29 from Polaromonas sp. (strain JS666 / ATCC BAA-500).